The chain runs to 534 residues: Glucomannan 4-beta-mannosyltransferase 2 (534 aa).

A helical membrane pass occupies residues 36 to 56; sequence VIVPLLQLAVYICLLMSVMLL. D136 is an active-site residue. Positions 195 and 197 each coordinate substrate. The active site involves D289. 4 helical membrane-spanning segments follow: residues 368 to 388, 404 to 426, 483 to 503, and 509 to 529; these read IIAHWVTFCFYCVVLPLTILV, IITILNSVGTPRSIHLLFYWILF, LNTLELGFAAFLFVCGCYDFV, and YFIYLFLQTMSFFISGLGWIG.

Belongs to the glycosyltransferase 2 family. Plant cellulose synthase-like A subfamily.

It is found in the golgi apparatus membrane. The enzyme catalyses GDP-mannose + (glucomannan)n = GDP + (glucomannan)n+1.. In terms of biological role, possesses glucomannan synthase and mannan synthase activities in vitro. Mannan synthase consists of a 4-beta-mannosyltransferase activity on mannan using GDP-mannose. The beta-1,4-mannan product is the backbone for galactomannan synthesis by galactomannan galactosyltransferase. Galactomannan is a noncellulosic polysaccharides of plant cell wall. This Arabidopsis thaliana (Mouse-ear cress) protein is Glucomannan 4-beta-mannosyltransferase 2.